The chain runs to 1418 residues: Alpha-latrotoxin-Lhe1a (1418 aa).

The signal sequence occupies residues 1–20 (MIFVGETMERANHSLVRLRR). The furin-like endopeptidase recognition region stretch occupies residues 17–20 (RLRR). Positions 238-257 (VLYALLYGTQTYISVMFFLL) are helix H8 is the probable transmembrane region of the tetrameric pore inserted in the target cell membrane. Cys413 and Cys1066 are disulfide-bonded. ANK repeat units lie at residues 458 to 489 (LYNA…ATFD), 490 to 521 (QGRT…ELNQ), 525 to 554 (KGYT…SINS), 559 to 589 (FLQT…NINE), 593 to 622 (DGFT…DVNA), 626 to 656 (KGLT…DINA), 660 to 690 (NNMT…NANV), 695 to 723 (GLLS…NVNV), 729 to 758 (GGIT…NIEQ), 762 to 791 (EKYT…NFEA), 795 to 824 (SGAT…NWRD), 828 to 857 (NGQM…TVLD), 862 to 891 (NSDT…DINT), 895 to 924 (NGHA…NVYI), 928 to 957 (NGMN…KFEW), 971 to 1003 (EECA…GNFN), 1004 to 1033 (ICGP…SVDG), 1035 to 1064 (KTDT…KVNH), 1068 to 1097 (NGMT…DFRR), 1101 to 1131 (RGAT…DINI), 1137 to 1166 (DKET…DVTI), and 1170 to 1199 (YDKT…KFRR). Residues 1026–1032 (EEVLSVD) are 4C4.1 epitope. Positions 1196–1199 (KFRR) are furin-like endopeptidase recognition region. A propeptide spanning residues 1200 to 1418 (EYKSSYGEHS…SEKKIQKISI (219 aa)) is cleaved from the precursor.

It belongs to the cationic peptide 01 (latrotoxin) family. 03 (alpha-latrotoxin) subfamily. As to quaternary structure, homotetramer in membranes. Post-translationally, processed by furin-like proteases at both the N- and C-termini. Expressed in venom gland, cephalothorax, and abdomen tissues from both males and females.

The protein localises to the secreted. Its subcellular location is the target cell membrane. In terms of biological role, presynaptic neurotoxin that causes massive release of neurotransmitters from vertebrate (but not invertebrate) nerve terminals and endocrine cells via a complex mechanism involving activation of receptor(s) and toxin insertion into the plasma membrane with subsequent pore formation. Binds to neurexin-1-alpha (NRXN1) in a calcium dependent manner, adhesion G protein-coupled receptor L1 (ADGRL1, also termed latrophilin-1 and calcium-independent receptor of latrotoxin (CIRL)), and receptor-type tyrosine-protein phosphatase S (PTPRS), also termed PTP sigma. NRXN1 and PTPRS are suggested to provide a platform for binding and subsequent pore formation events. In contrast, binding to ADGRL1 does not involve oligomerization and channel formation, but direct downstream stimulation of the synaptic fusion machinery. In Latrodectus hesperus (Western black widow spider), this protein is Alpha-latrotoxin-Lhe1a.